Consider the following 110-residue polypeptide: Large ribosomal subunit protein uL22 (110 aa).

Belongs to the universal ribosomal protein uL22 family. Part of the 50S ribosomal subunit.

Its function is as follows. This protein binds specifically to 23S rRNA; its binding is stimulated by other ribosomal proteins, e.g. L4, L17, and L20. It is important during the early stages of 50S assembly. It makes multiple contacts with different domains of the 23S rRNA in the assembled 50S subunit and ribosome. The globular domain of the protein is located near the polypeptide exit tunnel on the outside of the subunit, while an extended beta-hairpin is found that lines the wall of the exit tunnel in the center of the 70S ribosome. In Halorhodospira halophila (strain DSM 244 / SL1) (Ectothiorhodospira halophila (strain DSM 244 / SL1)), this protein is Large ribosomal subunit protein uL22.